Consider the following 517-residue polypeptide: Pentatricopeptide repeat-containing protein At1g77360, mitochondrial (517 aa).

The transit peptide at 1–59 (MKRFRIRSVDFRQLVNFFSFMRWECSSSATVWVRFNMTIRIINRQSRFCCKSFLSARLY) directs the protein to the mitochondrion. PPR repeat units lie at residues 133 to 163 (SVRAYHMMIESTAKIRQYKLMWDLINAMRKK), 167 to 201 (NVETFCIVMRKYARAQKVDEAIYAFNVMEKYDLPP), 202 to 232 (NLVAFNGLLSALCKSKNVRKAQEVFENMRDR), 236 to 270 (DSKTYSILLEGWGKEPNLPKAREVFREMIDAGCHP), 271 to 305 (DIVTYSIMVDILCKAGRVDEALGIVRSMDPSICKP), 306 to 340 (TTFIYSVLVHTYGTENRLEEAVDTFLEMERSGMKA), 341 to 375 (DVAVFNSLIGAFCKANRMKNVYRVLKEMKSKGVTP), 376 to 406 (NSKSCNIILRHLIERGEKDEAFDVFRKMIKV), 410 to 444 (DADTYTMVIKMFCEKKEMETADKVWKYMRKKGVFP), and 445 to 479 (SMHTFSVLINGLCEERTTQKACVLLEEMIEMGIRP).

Belongs to the PPR family. P subfamily.

Its subcellular location is the mitochondrion. This chain is Pentatricopeptide repeat-containing protein At1g77360, mitochondrial, found in Arabidopsis thaliana (Mouse-ear cress).